We begin with the raw amino-acid sequence, 1442 residues long: ABC transporter G family member 35 (1442 aa).

In terms of domain architecture, ABC transporter 1 spans 169–442; that stretch reads LGMIGIRLAK…FESFGFKCPE (274 aa). 202 to 209 lines the ATP pocket; it reads GPPSSGKT. The ABC transmembrane type-2 1 domain occupies 520–733; the sequence is ELLKSCWDKE…AFNAITVNEL (214 aa). The next 7 membrane-spanning stretches (helical) occupy residues 538–558, 573–593, 619–639, 657–677, 683–703, 714–734, and 769–789; these read FFYV…STLY, IYVG…LAEM, LPTF…WMVV, FLII…IAST, IANT…GFLL, WAYW…NELF, and IGVG…TLAL. Residues 840–1092 enclose the ABC transporter 2 domain; that stretch reads MSFDDVKYFV…KVVEYFESFP (253 aa). Residue 885-892 coordinates ATP; it reads GVSGAGKT. Residues 1165–1379 form the ABC transmembrane type-2 2 domain; that stretch reads GQFKSCLWKQ…TIYGLITSQY (215 aa). The next 7 helical transmembrane spans lie at 1186-1206, 1218-1238, 1272-1292, 1299-1319, 1329-1349, 1357-1377, and 1414-1434; these read LVRF…FWQI, MVIG…CSTV, LPYV…MVGF, FLWF…YGMM, VASI…GFFI, WWVW…LITS, and PVAG…AFCI.

Belongs to the ABC transporter superfamily. ABCG family. PDR (TC 3.A.1.205) subfamily. In terms of tissue distribution, ubiquitous with higher levels in roots.

It localises to the membrane. Functionally, may be a general defense protein. This chain is ABC transporter G family member 35 (ABCG35), found in Arabidopsis thaliana (Mouse-ear cress).